Consider the following 99-residue polypeptide: Aspartyl/glutamyl-tRNA(Asn/Gln) amidotransferase subunit C (99 aa).

This sequence belongs to the GatC family. In terms of assembly, heterotrimer of A, B and C subunits.

It catalyses the reaction L-glutamyl-tRNA(Gln) + L-glutamine + ATP + H2O = L-glutaminyl-tRNA(Gln) + L-glutamate + ADP + phosphate + H(+). The catalysed reaction is L-aspartyl-tRNA(Asn) + L-glutamine + ATP + H2O = L-asparaginyl-tRNA(Asn) + L-glutamate + ADP + phosphate + 2 H(+). Functionally, allows the formation of correctly charged Asn-tRNA(Asn) or Gln-tRNA(Gln) through the transamidation of misacylated Asp-tRNA(Asn) or Glu-tRNA(Gln) in organisms which lack either or both of asparaginyl-tRNA or glutaminyl-tRNA synthetases. The reaction takes place in the presence of glutamine and ATP through an activated phospho-Asp-tRNA(Asn) or phospho-Glu-tRNA(Gln). In Methylibium petroleiphilum (strain ATCC BAA-1232 / LMG 22953 / PM1), this protein is Aspartyl/glutamyl-tRNA(Asn/Gln) amidotransferase subunit C.